The sequence spans 388 residues: Isocitrate dehydrogenase [NAD] subunit 1, mitochondrial (388 aa).

The transit peptide at 1 to 35 (MFSLRTAQPAQSLFRAATNTYSTSLPRSAIAARSF) directs the protein to the mitochondrion. The substrate site is built by Arg-137, Arg-168, and Asp-255. Asp-255 serves as a coordination point for Mg(2+).

The protein belongs to the isocitrate and isopropylmalate dehydrogenases family. As to quaternary structure, octamer of two non-identical subunits IDH1 and IDH2. The cofactor is Mg(2+). It depends on Mn(2+) as a cofactor.

It localises to the mitochondrion. The enzyme catalyses D-threo-isocitrate + NAD(+) = 2-oxoglutarate + CO2 + NADH. Functionally, performs an essential role in the oxidative function of the citric acid cycle. The polypeptide is Isocitrate dehydrogenase [NAD] subunit 1, mitochondrial (IDH1) (Ajellomyces capsulatus (Darling's disease fungus)).